Consider the following 602-residue polypeptide: Alpha-glucosides permease MPH3 (602 aa).

The Cytoplasmic portion of the chain corresponds to 1-106 (MKNLSFLINR…AAAWSLLVST (106 aa)). The helical transmembrane segment at 107-127 (TLIMEGYDTAILGAFYALPIF) threads the bilayer. The Extracellular portion of the chain corresponds to 128–142 (QRKFGSQNDKTGEWE). Residues 143 to 163 (ISASWQIGLTLCYMAGEIVGL) traverse the membrane as a helical segment. Residues 164–178 (QLTGPSVDLVGNRYT) are Cytoplasmic-facing. Residues 179–199 (LIIALFFLAAFTFILYFCNSL) traverse the membrane as a helical segment. Residue Gly-200 is a topological domain, extracellular. The helical transmembrane segment at 201 to 221 (MIAVGQALCGMPWGCFQCLTV) threads the bilayer. At 222–234 (SYASEICPLALRY) the chain is on the cytoplasmic side. Residues 235–255 (YLTTYSNLCWLFGQLFAAGIM) form a helical membrane-spanning segment. The Extracellular segment spans residues 256–270 (KNSQKKYADSELGYK). The chain crosses the membrane as a helical span at residues 271-291 (LPFALQWILPVPLALGIFFAP). Over 292–363 (ESPWWLVKKG…EDKINRRRTR (72 aa)) the chain is Cytoplasmic. Residues 364-384 (ITCLCWAGQATCGSILIGYST) traverse the membrane as a helical segment. Residues 385–397 (YFYEKAGVSTEMS) lie on the Extracellular side of the membrane. Residues 398–418 (FTFSIIQYCLGICATFLSWWA) traverse the membrane as a helical segment. Topologically, residues 419-426 (SKYFGRYD) are cytoplasmic. A helical transmembrane segment spans residues 427–447 (LYAFGLAFQTIVFFIIGGLGC). Residues 448–459 (SSTHGSKMGSGS) lie on the Extracellular side of the membrane. The chain crosses the membrane as a helical span at residues 460-480 (LLMAVAFFYNLGIAPVVFCLV). The Cytoplasmic portion of the chain corresponds to 481 to 492 (SEMPSSRLRTKT). A helical membrane pass occupies residues 493–513 (IILARNTYNVVSIICSVLILY). Residues 514 to 525 (QLNSKKWNWGAK) lie on the Extracellular side of the membrane. The helical transmembrane segment at 526-546 (SGFFWGVLCFCTLIWAVVDLP) threads the bilayer. Residues 547 to 602 (ETAGKTFVEINELFKLGVSARKFKSTKVDPFVVKNPPKDVSHNDPKGDIEASIAEE) lie on the Cytoplasmic side of the membrane. Residues 580–602 (KNPPKDVSHNDPKGDIEASIAEE) form a disordered region. Residues 582–595 (PPKDVSHNDPKGDI) show a composition bias toward basic and acidic residues.

Belongs to the major facilitator superfamily. Sugar transporter (TC 2.A.1.1) family.

The protein resides in the cell membrane. Its function is as follows. High-affinity uptake of maltose and maltotriose. Also transports alpha-methylglucoside, glucose and turanose but not melezitose or trehalose. The chain is Alpha-glucosides permease MPH3 (MPH3) from Saccharomyces cerevisiae (strain AWRI1631) (Baker's yeast).